We begin with the raw amino-acid sequence, 200 residues long: Recombination protein RecR (200 aa).

The C4-type zinc-finger motif lies at 59 to 74; the sequence is CSVCFHLSADPVCDIC. One can recognise a Toprim domain in the interval 82–176; it reads TVICVVADSR…RVTRIAFGLP (95 aa).

The protein belongs to the RecR family.

May play a role in DNA repair. It seems to be involved in an RecBC-independent recombinational process of DNA repair. It may act with RecF and RecO. The sequence is that of Recombination protein RecR from Acaryochloris marina (strain MBIC 11017).